Reading from the N-terminus, the 644-residue chain is Biosynthetic arginine decarboxylase (644 aa).

The residue at position 105 (lysine 105) is an N6-(pyridoxal phosphate)lysine. Residue 287–297 (LDVGGGLGIDY) participates in substrate binding.

This sequence belongs to the Orn/Lys/Arg decarboxylase class-II family. SpeA subfamily. It depends on Mg(2+) as a cofactor. Pyridoxal 5'-phosphate is required as a cofactor.

It carries out the reaction L-arginine + H(+) = agmatine + CO2. In terms of biological role, catalyzes the biosynthesis of agmatine from arginine. The chain is Biosynthetic arginine decarboxylase from Parasynechococcus marenigrum (strain WH8102).